The following is a 649-amino-acid chain: Archaeal Lon protease (649 aa).

The Cytoplasmic segment spans residues 1 to 114; the sequence is MFSIKFKTTE…KLDFKAPSST (114 aa). Residue 47–54 participates in ATP binding; that stretch reads GDPGVGKS. A helical transmembrane segment spans residues 115 to 135; the sequence is TLLLIMIGAILLSEYLLKYLP. The Extracellular segment spans residues 136–138; that stretch reads QNY. The helical transmembrane segment at 139–159 threads the bilayer; that stretch reads LLAAVTITALIVLIFGFVIIL. Residues 160 to 649 lie on the Cytoplasmic side of the membrane; sequence TSIMGASRAS…DNRGGAERFN (490 aa). The 184-residue stretch at 456–639 folds into the Lon proteolytic domain; sequence EPKVGVIYGL…DEIVPLVFDL (184 aa). Catalysis depends on residues S550 and K593.

Belongs to the peptidase S16 family. Archaeal LonB subfamily. Homohexamer. Organized in a ring with a central cavity.

The protein localises to the cell membrane. In terms of biological role, ATP-dependent serine protease that mediates the selective degradation of mutant and abnormal proteins as well as certain short-lived regulatory proteins. Degrades polypeptides processively. This chain is Archaeal Lon protease, found in Methanocaldococcus jannaschii (strain ATCC 43067 / DSM 2661 / JAL-1 / JCM 10045 / NBRC 100440) (Methanococcus jannaschii).